The chain runs to 233 residues: MALRTLASKNALSFALGGAARPSAASARGVTTVALPDLSYDFGALEPAISGEIMRLHHQKHHATYVGNYNKALEQLDAAVAKGDASAVVQLQGAIKFNGGGHVNHSIFWKNLKPISEGGGEPPHGKLGWAIDEDFGSFEALVKRMNAEGAALQGSGWVWLALDKEPKKLSVETTANQDPLVTKGASLVPLLGIDVWEHAYYLQYKNVRPDYLNNIWKVMNWKYAGEVYENVLA.

A mitochondrion-targeting transit peptide spans 1 to 29; that stretch reads MALRTLASKNALSFALGGAARPSAASARG. Residues histidine 57, histidine 105, aspartate 194, and histidine 198 each contribute to the Mn(2+) site.

Belongs to the iron/manganese superoxide dismutase family. In terms of assembly, homotetramer. Mn(2+) is required as a cofactor.

It is found in the mitochondrion matrix. It carries out the reaction 2 superoxide + 2 H(+) = H2O2 + O2. Functionally, destroys superoxide anion radicals which are normally produced within the cells and which are toxic to biological systems. This is Superoxide dismutase [Mn] 3.4, mitochondrial (SODA.3) from Zea mays (Maize).